A 378-amino-acid chain; its full sequence is Homoserine O-acetyltransferase (378 aa).

One can recognise an AB hydrolase-1 domain in the interval Asn-52–Leu-337. Residue Ser-148 is the Nucleophile of the active site. Arg-217 provides a ligand contact to substrate. Residues Asp-304 and His-333 contribute to the active site. Asp-334 lines the substrate pocket.

It belongs to the AB hydrolase superfamily. MetX family. Homodimer.

It localises to the cytoplasm. It carries out the reaction L-homoserine + acetyl-CoA = O-acetyl-L-homoserine + CoA. It functions in the pathway amino-acid biosynthesis; L-methionine biosynthesis via de novo pathway; O-acetyl-L-homoserine from L-homoserine: step 1/1. In terms of biological role, transfers an acetyl group from acetyl-CoA to L-homoserine, forming acetyl-L-homoserine. In Chloroherpeton thalassium (strain ATCC 35110 / GB-78), this protein is Homoserine O-acetyltransferase.